A 309-amino-acid chain; its full sequence is Elongation factor Ts (309 aa).

Residues 82-85 (TDFV) form an involved in Mg(2+) ion dislocation from EF-Tu region.

This sequence belongs to the EF-Ts family.

It localises to the cytoplasm. Associates with the EF-Tu.GDP complex and induces the exchange of GDP to GTP. It remains bound to the aminoacyl-tRNA.EF-Tu.GTP complex up to the GTP hydrolysis stage on the ribosome. The sequence is that of Elongation factor Ts from Rickettsia typhi (strain ATCC VR-144 / Wilmington).